A 179-amino-acid chain; its full sequence is UPF0227 protein SO_2251 (179 aa).

The protein belongs to the UPF0227 family.

This Shewanella oneidensis (strain ATCC 700550 / JCM 31522 / CIP 106686 / LMG 19005 / NCIMB 14063 / MR-1) protein is UPF0227 protein SO_2251.